A 368-amino-acid chain; its full sequence is WD repeat-containing protein 53 homolog (368 aa).

6 WD repeats span residues 27–66 (GHKD…SIQS), 71–108 (FQGN…VILK), 116–155 (FNTE…LVES), 159–199 (KHTN…VLHR), 228–267 (LNPP…QYLK), and 271–315 (IHKS…NTKV). Residues 207–231 (LPQNISKSQQQQQETTEPNRMLNPP) are disordered.

The protein belongs to the WD repeat WDR53 family.

This is WD repeat-containing protein 53 homolog (wdr53) from Dictyostelium discoideum (Social amoeba).